Reading from the N-terminus, the 346-residue chain is GTPase Obg (346 aa).

Positions 1–159 (MKFLDEAKVY…RWIWLRLKLI (159 aa)) constitute an Obg domain. One can recognise an OBG-type G domain in the interval 160–327 (ADAGLVGLPN…ALRALVAVIG (168 aa)). GTP is bound by residues 166-173 (GLPNAGKS), 191-195 (FTTLH), 212-215 (DIPG), 279-282 (NKID), and 308-310 (SAA). 2 residues coordinate Mg(2+): serine 173 and threonine 193.

Belongs to the TRAFAC class OBG-HflX-like GTPase superfamily. OBG GTPase family. In terms of assembly, monomer. Requires Mg(2+) as cofactor.

It localises to the cytoplasm. Functionally, an essential GTPase which binds GTP, GDP and possibly (p)ppGpp with moderate affinity, with high nucleotide exchange rates and a fairly low GTP hydrolysis rate. Plays a role in control of the cell cycle, stress response, ribosome biogenesis and in those bacteria that undergo differentiation, in morphogenesis control. The protein is GTPase Obg of Bradyrhizobium diazoefficiens (strain JCM 10833 / BCRC 13528 / IAM 13628 / NBRC 14792 / USDA 110).